We begin with the raw amino-acid sequence, 141 residues long: ATP synthase epsilon chain 1 (141 aa).

Belongs to the ATPase epsilon chain family. As to quaternary structure, F-type ATPases have 2 components, CF(1) - the catalytic core - and CF(0) - the membrane proton channel. CF(1) has five subunits: alpha(3), beta(3), gamma(1), delta(1), epsilon(1). CF(0) has three main subunits: a, b and c.

It is found in the cell inner membrane. Functionally, produces ATP from ADP in the presence of a proton gradient across the membrane. In Paraburkholderia xenovorans (strain LB400), this protein is ATP synthase epsilon chain 1.